The sequence spans 208 residues: dITP/XTP pyrophosphatase (208 aa).

11-16 (TGNAKK) is a substrate binding site. Residue aspartate 73 is the Proton acceptor of the active site. Position 73 (aspartate 73) interacts with Mg(2+). Substrate is bound by residues serine 74, 157–160 (FGYD), lysine 180, and 185–186 (HR).

This sequence belongs to the HAM1 NTPase family. As to quaternary structure, homodimer. It depends on Mg(2+) as a cofactor.

It carries out the reaction XTP + H2O = XMP + diphosphate + H(+). It catalyses the reaction dITP + H2O = dIMP + diphosphate + H(+). The catalysed reaction is ITP + H2O = IMP + diphosphate + H(+). Its function is as follows. Pyrophosphatase that catalyzes the hydrolysis of nucleoside triphosphates to their monophosphate derivatives, with a high preference for the non-canonical purine nucleotides XTP (xanthosine triphosphate), dITP (deoxyinosine triphosphate) and ITP. Seems to function as a house-cleaning enzyme that removes non-canonical purine nucleotides from the nucleotide pool, thus preventing their incorporation into DNA/RNA and avoiding chromosomal lesions. The protein is dITP/XTP pyrophosphatase of Rhodopirellula baltica (strain DSM 10527 / NCIMB 13988 / SH1).